Reading from the N-terminus, the 490-residue chain is Tektin-3 (490 aa).

Thr-7 and Thr-9 each carry an O-linked (GalNAc...) threonine glycan. Residues Asn-41, Asn-86, Asn-111, and Asn-276 are each glycosylated (N-linked (GlcNAc...) asparagine). A coiled-coil region spans residues Arg-419–Glu-456.

The protein belongs to the tektin family. Microtubule inner protein component of sperm flagellar doublet microtubules. Interacts with TEKT1, TEKT2, TEKT4 and TEKT5. Interacts with CCDC38. N- and O-glycosylated. In terms of processing, may be proteolytically processed during the epididymal transit of spermatozoa. Post-translationally, ubiquitinated, leading to its degradation. Deubiquitinated by USP16, promoting its stability. Expressed in epididymal sperm (at protein level).

Its subcellular location is the cytoplasm. The protein resides in the cytoskeleton. It is found in the cilium axoneme. The protein localises to the flagellum axoneme. It localises to the cytoplasmic vesicle. Its subcellular location is the secretory vesicle. The protein resides in the acrosome outer membrane. Its function is as follows. Microtubule inner protein (MIP) part of the dynein-decorated doublet microtubules (DMTs) in cilia and flagellar axoneme. Forms filamentous polymers in the walls of ciliary and flagellar microtubules. Required for normal sperm mobility. This is Tektin-3 (Tekt3) from Rattus norvegicus (Rat).